The following is a 631-amino-acid chain: Mu-like prophage FluMu protein gp42 (631 aa).

Transmembrane regions (helical) follow at residues 56–76 (LGNI…TMVG) and 385–405 (GLAD…PVYV). The segment at 425–453 (IEDGRDKDKKTQKKNKPPRPKRGRGSVRS) is disordered. The segment covering 434–449 (KTQKKNKPPRPKRGRG) has biased composition (basic residues). The next 3 helical transmembrane spans lie at 455–475 (VAAV…VTTA), 495–515 (SKAV…TVLM), and 543–563 (ALIP…GWLG).

This sequence to phage Mu protein gp42.

It localises to the cell membrane. This chain is Mu-like prophage FluMu protein gp42, found in Haemophilus influenzae (strain ATCC 51907 / DSM 11121 / KW20 / Rd).